The sequence spans 81 residues: MKKVLRVYGGVMRLVRLLPADSRPYYAKYARENFVNYREVDQSETSLDELFQRAYNHSLWVLKKYSIDESAATKLKEICFE.

The protein belongs to the complex I LYR family. LYRM9 subfamily.

This is LYR motif-containing protein At3g19508 from Arabidopsis thaliana (Mouse-ear cress).